The primary structure comprises 200 residues: MITVVLIFSAYLLGSISFAVVASWLFKLPDPRSYGSRNPGATNVLRTGKKAAAAVTLLGDAGKGWVAVAAAKYGGEVWELGDEVIAGAALAVFLGHLFPIFLAFKGGKGVATSAGILLGLNPWLGVLTISTWMVVALVSRISSLSALLSALLAPLYAYFLLEKGILIMAVSIISVLLILKHRLNIANLMAGKEARIGKSS.

A run of 4 helical transmembrane segments spans residues Met-1–Val-21, Val-84–Phe-104, Ile-116–Ala-136, and Phe-159–Leu-179.

The protein belongs to the PlsY family. In terms of assembly, probably interacts with PlsX.

The protein resides in the cell inner membrane. It carries out the reaction an acyl phosphate + sn-glycerol 3-phosphate = a 1-acyl-sn-glycero-3-phosphate + phosphate. It participates in lipid metabolism; phospholipid metabolism. Functionally, catalyzes the transfer of an acyl group from acyl-phosphate (acyl-PO(4)) to glycerol-3-phosphate (G3P) to form lysophosphatidic acid (LPA). This enzyme utilizes acyl-phosphate as fatty acyl donor, but not acyl-CoA or acyl-ACP. The sequence is that of Glycerol-3-phosphate acyltransferase from Nitrosomonas europaea (strain ATCC 19718 / CIP 103999 / KCTC 2705 / NBRC 14298).